A 203-amino-acid polypeptide reads, in one-letter code: uncharacterized protein (203 aa).

This sequence belongs to the DadA oxidoreductase family.

Either a functional dehydrogenase or a non-functional fragment. This is an uncharacterized protein from Sinorhizobium fredii (strain NBRC 101917 / NGR234).